Reading from the N-terminus, the 291-residue chain is Neugrin (291 aa).

The signal sequence occupies residues 1-15 (MAVTLSLLLGGRVCA). 2 disordered regions span residues 26-48 (GVAG…PEER) and 155-270 (GSGN…DNFS). Ser-41 carries the phosphoserine modification. N-linked (GlcNAc...) asparagine glycosylation is found at Asn-158 and Asn-186. The span at 236–246 (KYSSDSESPRG) shows a compositional bias: polar residues. A glycan (N-linked (GlcNAc...) asparagine) is linked at Asn-268.

This sequence belongs to the neugrin family. As to quaternary structure, forms a regulatory protein-RNA complex, consisting of RCC1L, NGRN, RPUSD3, RPUSD4, TRUB2, FASTKD2 and 16S mt-rRNA. Interacts with 16S mt-rRNA; this interaction is direct. As to expression, expressed at high levels in heart, brain and skeletal muscle. In brain, mainly expressed in neurons rather than glial cells.

Its subcellular location is the nucleus. It is found in the secreted. It localises to the mitochondrion membrane. Its function is as follows. Plays an essential role in mitochondrial ribosome biogenesis. As a component of a functional protein-RNA module, consisting of RCC1L, NGRN, RPUSD3, RPUSD4, TRUB2, FASTKD2 and 16S mitochondrial ribosomal RNA (16S mt-rRNA), controls 16S mt-rRNA abundance and is required for intra-mitochondrial translation of core subunits of the oxidative phosphorylation system. The chain is Neugrin from Homo sapiens (Human).